The chain runs to 177 residues: tRNA (cytidine(56)-2'-O)-methyltransferase (177 aa).

S-adenosyl-L-methionine contacts are provided by residues L83 and 108–112 (GAEKV).

Belongs to the aTrm56 family. Homodimer.

It localises to the cytoplasm. It catalyses the reaction cytidine(56) in tRNA + S-adenosyl-L-methionine = 2'-O-methylcytidine(56) in tRNA + S-adenosyl-L-homocysteine + H(+). In terms of biological role, specifically catalyzes the AdoMet-dependent 2'-O-ribose methylation of cytidine at position 56 in tRNAs. The protein is tRNA (cytidine(56)-2'-O)-methyltransferase of Nitrosopumilus maritimus (strain SCM1).